The chain runs to 344 residues: Protein pelota homolog (344 aa).

Belongs to the eukaryotic release factor 1 family. Pelota subfamily. In terms of assembly, monomer. The cofactor is a divalent metal cation.

The protein localises to the cytoplasm. Its function is as follows. May function in recognizing stalled ribosomes, interact with stem-loop structures in stalled mRNA molecules, and effect endonucleolytic cleavage of the mRNA. May play a role in the release non-functional ribosomes and degradation of damaged mRNAs. Has endoribonuclease activity. The chain is Protein pelota homolog from Archaeoglobus fulgidus (strain ATCC 49558 / DSM 4304 / JCM 9628 / NBRC 100126 / VC-16).